A 601-amino-acid polypeptide reads, in one-letter code: Adenine deaminase (601 aa).

The protein belongs to the metallo-dependent hydrolases superfamily. Adenine deaminase family. Mn(2+) is required as a cofactor.

The catalysed reaction is adenine + H2O + H(+) = hypoxanthine + NH4(+). This chain is Adenine deaminase, found in Ruegeria sp. (strain TM1040) (Silicibacter sp.).